A 419-amino-acid polypeptide reads, in one-letter code: BTB/POZ domain-containing protein KCTD20 (419 aa).

The BTB domain maps to 117–191 (EKVTLLVDGT…YKTGIINCPD (75 aa)).

Interacts with AKT1; AKT2 and AKT3. Associates with PP2CA. Part of a complex containing MARK4.

It is found in the cytoplasm. Functionally, promotes the phosphorylation of AKT family members. The protein is BTB/POZ domain-containing protein KCTD20 (KCTD20) of Homo sapiens (Human).